The following is a 165-amino-acid chain: uncharacterized protein (165 aa).

Residues 76–161 enclose the RCK C-terminal domain; sequence LEQVESALDD…LKRLIREKLT (86 aa).

This is an uncharacterized protein from Bacillus subtilis (strain 168).